The chain runs to 357 residues: Hemolysin VllY (357 aa).

VOC domains are found at residues 12 to 132 (GFEF…FVDR) and 162 to 313 (EIDH…IFTQ). His-165, His-243, and Glu-322 together coordinate Fe cation.

This sequence belongs to the 4HPPD family. The cofactor is Fe cation.

The chain is Hemolysin VllY (vllY) from Vibrio vulnificus (strain CMCP6).